A 190-amino-acid polypeptide reads, in one-letter code: uncharacterized protein (190 aa).

Residues 12-34 (LLGLSIFLTTFLFVANFLPGIFA) form a helical membrane-spanning segment.

The protein resides in the membrane. This is an uncharacterized protein from Archaeoglobus fulgidus (strain ATCC 49558 / DSM 4304 / JCM 9628 / NBRC 100126 / VC-16).